A 366-amino-acid chain; its full sequence is Cobalt-precorrin-5B C(1)-methyltransferase (366 aa).

This sequence belongs to the CbiD family.

The catalysed reaction is Co-precorrin-5B + S-adenosyl-L-methionine = Co-precorrin-6A + S-adenosyl-L-homocysteine. Its pathway is cofactor biosynthesis; adenosylcobalamin biosynthesis; cob(II)yrinate a,c-diamide from sirohydrochlorin (anaerobic route): step 6/10. In terms of biological role, catalyzes the methylation of C-1 in cobalt-precorrin-5B to form cobalt-precorrin-6A. This is Cobalt-precorrin-5B C(1)-methyltransferase from Methanococcus maripaludis (strain C7 / ATCC BAA-1331).